The chain runs to 230 residues: uncharacterized protein (230 aa).

The chain crosses the membrane as a helical span at residues Leu7–Gly23. Residues Lys27–Asn230 form a disordered region. Residues Ala50–Ala59 are compositionally biased toward low complexity. A compositionally biased stretch (basic and acidic residues) spans Ala60–Asp83. The segment covering Lys101–Lys112 has biased composition (basic residues). The span at Lys113–Pro173 shows a compositional bias: basic and acidic residues. Over residues Glu199 to Ala210 the composition is skewed to acidic residues. A compositionally biased stretch (basic and acidic residues) spans Glu211 to Asn230.

It is found in the membrane. This is an uncharacterized protein from Caenorhabditis elegans.